The primary structure comprises 327 residues: Thiamine-binding periplasmic protein (327 aa).

Residues 1-18 (MLKKYLPLLLLCAAPAFA) form the signal peptide. Thiamine is bound by residues 59-60 (DG), 161-162 (ST), Trp197, and 215-218 (YTTS).

This sequence belongs to the bacterial solute-binding protein 1 family. As to quaternary structure, the complex is composed of two ATP-binding proteins (ThiQ), two transmembrane proteins (ThiP) and a solute-binding protein (ThiB).

The protein resides in the periplasm. Functionally, part of the ABC transporter complex ThiBPQ involved in thiamine import. Is also involved in thiamine pyrophosphate transport. This Salmonella typhimurium (strain LT2 / SGSC1412 / ATCC 700720) protein is Thiamine-binding periplasmic protein.